The primary structure comprises 1256 residues: Neuronal cell adhesion molecule (1256 aa).

The first 29 residues, 1–29, serve as a signal peptide directing secretion; that stretch reads MQLKIMPKKKHLSAGGVPLILFLCQMISA. Over 30–1119 the chain is Extracellular; it reads LDVPLDLVQP…ASRQVDIATQ (1090 aa). 2 consecutive Ig-like C2-type domains span residues 40 to 128 and 135 to 229; these read PTIT…AAVS and PSRS…QPIS. Disulfide bonds link Cys62–Cys117 and Cys161–Cys212. Asn77 is a glycosylation site (N-linked (GlcNAc...) asparagine). Asn217, Asn239, Asn245, Asn270, Asn308, and Asn371 each carry an N-linked (GlcNAc...) asparagine glycan. 4 consecutive Ig-like C2-type domains span residues 261 to 350, 355 to 442, 448 to 535, and 539 to 626; these read PPTF…ISVT, PYWI…AFVN, PRIL…VHLE, and PTRI…AVLR. The cysteines at positions 286 and 334 are disulfide-linked. Cysteines 376 and 426 form a disulfide. 2 N-linked (GlcNAc...) asparagine glycosylation sites follow: Asn427 and Asn501. 2 disulfide bridges follow: Cys470–Cys519 and Cys561–Cys610. N-linked (GlcNAc...) asparagine glycosylation is found at Asn613, Asn710, Asn796, Asn852, Asn987, Asn1003, Asn1013, and Asn1067. Fibronectin type-III domains are found at residues 643–738, 740–837, 842–944, and 948–1045; these read PPFD…TKAA, PDQN…SGED, APGN…TPEG, and APSS…VDEA. A helical transmembrane segment spans residues 1120–1142; it reads GWFIGLMCAVALLILILLIVCFI. The Cytoplasmic portion of the chain corresponds to 1143–1256; it reads RRNKGGKYPV…SPVNAMNSFV (114 aa). The span at 1151–1171 shows a compositional bias: basic and acidic residues; that stretch reads PVKEKEDAHADPEIQPMKEDD. The interval 1151–1256 is disordered; sequence PVKEKEDAHA…SPVNAMNSFV (106 aa). Thr1173 bears the Phosphothreonine mark. Tyr1177 is subject to Phosphotyrosine. The residue at position 1178 (Ser1178) is a Phosphoserine. Over residues 1193–1202 the composition is skewed to basic and acidic residues; sequence PSDRTVKKED. Residues Ser1203, Ser1206, Ser1223, Ser1242, Ser1243, and Ser1247 each carry the phosphoserine modification. A compositionally biased stretch (polar residues) spans 1240–1256; it reads NESSEAPSPVNAMNSFV.

This sequence belongs to the immunoglobulin superfamily. L1/neurofascin/NgCAM family. Constituent of a NFASC/NRCAM/ankyrin-G complex. Detected in a complex with CNTN1 and PTPRB. Interacts with GLDN/gliomedin and MYOC. Detected in sciatic nerve. Detected in brain, especially in the cerebellum Purkinje cell layer, inner granule cell layer and molecular layer (at protein level). Detected in neurons and Schwann cells.

The protein resides in the cell membrane. It is found in the cell projection. It localises to the axon. Its subcellular location is the secreted. Functionally, cell adhesion protein that is required for normal responses to cell-cell contacts in brain and in the peripheral nervous system. Plays a role in neurite outgrowth in response to contactin binding. Plays a role in mediating cell-cell contacts between Schwann cells and axons. Plays a role in the formation and maintenance of the nodes of Ranvier on myelinated axons. Nodes of Ranvier contain clustered sodium channels that are crucial for the saltatory propagation of action potentials along myelinated axons. During development, nodes of Ranvier are formed by the fusion of two heminodes. Required for normal clustering of sodium channels at heminodes; not required for the formation of mature nodes with normal sodium channel clusters. Required, together with GLDN, for maintaining NFASC and sodium channel clusters at mature nodes of Ranvier. This chain is Neuronal cell adhesion molecule (Nrcam), found in Mus musculus (Mouse).